Here is a 129-residue protein sequence, read N- to C-terminus: Large-conductance mechanosensitive channel (129 aa).

3 helical membrane passes run 14–34 (IIDL…VTSL), 38–58 (IIMP…SFVY), and 67–87 (LGVF…IFMA).

The protein belongs to the MscL family. Homopentamer.

Its subcellular location is the cell membrane. Channel that opens in response to stretch forces in the membrane lipid bilayer. May participate in the regulation of osmotic pressure changes within the cell. The sequence is that of Large-conductance mechanosensitive channel from Lysinibacillus sphaericus (strain C3-41).